The primary structure comprises 192 residues: Transcription termination/antitermination protein NusG (192 aa).

It belongs to the NusG family.

Functionally, participates in transcription elongation, termination and antitermination. This chain is Transcription termination/antitermination protein NusG, found in Rickettsia prowazekii (strain Madrid E).